The following is a 106-amino-acid chain: METLDYRFEGHTAVQFPRGAVLVGVLASGNLEILLEPAALDGAMTVRIITAAKGFGSVWQAVISDFAQRHPLRDVRISINDAGATPAVVSLRLDQAVETLLAGEPR.

An O-(phosphoribosyl dephospho-coenzyme A)serine modification is found at Ser-28.

It belongs to the MdcC family. In terms of processing, covalently binds the prosthetic group of malonate decarboxylase.

It localises to the cytoplasm. Subunit of malonate decarboxylase, it is an acyl carrier protein to which acetyl and malonyl thioester residues are bound via a 2'-(5''-phosphoribosyl)-3'-dephospho-CoA prosthetic group and turn over during the catalytic mechanism. The protein is Malonate decarboxylase acyl carrier protein of Stenotrophomonas maltophilia (strain K279a).